Here is a 179-residue protein sequence, read N- to C-terminus: Large ribosomal subunit protein uL6 (179 aa).

The protein belongs to the universal ribosomal protein uL6 family. In terms of assembly, part of the 50S ribosomal subunit.

In terms of biological role, this protein binds to the 23S rRNA, and is important in its secondary structure. It is located near the subunit interface in the base of the L7/L12 stalk, and near the tRNA binding site of the peptidyltransferase center. The chain is Large ribosomal subunit protein uL6 from Syntrophomonas wolfei subsp. wolfei (strain DSM 2245B / Goettingen).